A 539-amino-acid chain; its full sequence is Protoporphyrinogen oxidase (539 aa).

FAD is bound by residues 18 to 23 (GGGVSG), 43 to 44 (ES), tryptophan 51, 70 to 73 (GPRT), valine 300, and 521 to 523 (PGV).

It belongs to the protoporphyrinogen/coproporphyrinogen oxidase family. Protoporphyrinogen oxidase subfamily. The cofactor is FAD.

It is found in the mitochondrion inner membrane. The enzyme catalyses protoporphyrinogen IX + 3 O2 = protoporphyrin IX + 3 H2O2. It participates in porphyrin-containing compound metabolism; protoporphyrin-IX biosynthesis; protoporphyrin-IX from protoporphyrinogen-IX: step 1/1. In terms of biological role, catalyzes the 6-electron oxidation of protoporphyrinogen-IX to form protoporphyrin-IX. In Saccharomyces cerevisiae (strain ATCC 204508 / S288c) (Baker's yeast), this protein is Protoporphyrinogen oxidase.